A 635-amino-acid chain; its full sequence is Threonine--tRNA ligase (635 aa).

The 61-residue stretch at 1 to 61 (MIKITLKDGS…ENDCTLNLLT (61 aa)) folds into the TGS domain. Residues 242–532 (DHRKLGRELD…LTEHYAGAFP (291 aa)) are catalytic. Residues cysteine 333, histidine 384, and histidine 509 each coordinate Zn(2+).

It belongs to the class-II aminoacyl-tRNA synthetase family. In terms of assembly, homodimer. The cofactor is Zn(2+).

It localises to the cytoplasm. The catalysed reaction is tRNA(Thr) + L-threonine + ATP = L-threonyl-tRNA(Thr) + AMP + diphosphate + H(+). In terms of biological role, catalyzes the attachment of threonine to tRNA(Thr) in a two-step reaction: L-threonine is first activated by ATP to form Thr-AMP and then transferred to the acceptor end of tRNA(Thr). Also edits incorrectly charged L-seryl-tRNA(Thr). The sequence is that of Threonine--tRNA ligase from Acetivibrio thermocellus (strain ATCC 27405 / DSM 1237 / JCM 9322 / NBRC 103400 / NCIMB 10682 / NRRL B-4536 / VPI 7372) (Clostridium thermocellum).